We begin with the raw amino-acid sequence, 370 residues long: Sodium-dependent organic anion transporter (370 aa).

Residues 1-24 (MSADCEGNSTCPANSTEEDPPVGM) form a disordered region. Over 1–32 (MSADCEGNSTCPANSTEEDPPVGMEGQGSLKL) the chain is Extracellular. N-linked (GlcNAc...) asparagine glycosylation is found at Asn8 and Asn14. Residues 33 to 53 (VFTVLSAVMVGLVMFSFGCSV) traverse the membrane as a helical segment. Topologically, residues 54–67 (ESRKLWLHLRRPWG) are cytoplasmic. The chain crosses the membrane as a helical span at residues 68 to 88 (IAVGLLCQFGLMPLTAYLLAI). The Extracellular segment spans residues 89–97 (GFGLKPFQA). The helical transmembrane segment at 98–118 (IAVLIMGSCPGGTVSNVLTFW) threads the bilayer. The Cytoplasmic segment spans residues 119 to 126 (VDGDMDLS). Residues 127 to 147 (ISMTTCSTVAALGMMPLCLYV) traverse the membrane as a helical segment. The Extracellular portion of the chain corresponds to 148-159 (YTRSWTLPQSLT). The helical transmembrane segment at 160 to 180 (IPYQSIGITLVSLVVPVASGI) threads the bilayer. The Cytoplasmic segment spans residues 181 to 195 (YVNYRWPKQATFILK). Residues 196-216 (VGAAVGGMLLLVVAVTGVVLA) form a helical membrane-spanning segment. The Extracellular segment spans residues 217 to 224 (KGWNIDVT). The chain crosses the membrane as a helical span at residues 225–245 (LLVISCIFPLVGHVMGFLLAF). Residues 246–265 (LTHQSWQRCRTISIETGAQN) lie on the Cytoplasmic side of the membrane. The chain crosses the membrane as a helical span at residues 266-283 (IQLCIAMMQLSFSAEYLV). Position 284 (Gln284) is a topological domain, extracellular. A helical transmembrane segment spans residues 285-305 (LLNFALAYGLFQVLHGLLIVA). At 306–370 (AYQAYKRRQK…ELTSHVPSCE (65 aa)) the chain is on the cytoplasmic side.

The protein belongs to the bile acid:sodium symporter (BASS) (TC 2.A.28) family. Post-translationally, glycosylated. As to expression, highly expressed in heart, lung, spleen and adrenal gland. Moderately expressed in skeletal muscle, testis and small intestine.

The protein localises to the membrane. It carries out the reaction estrone 3-sulfate(out) + 2 Na(+)(out) = estrone 3-sulfate(in) + 2 Na(+)(in). The catalysed reaction is 17beta-estradiol 3-sulfate(out) + 2 Na(+)(out) = 17beta-estradiol 3-sulfate(in) + 2 Na(+)(in). The enzyme catalyses dehydroepiandrosterone 3-sulfate(out) + 2 Na(+)(out) = dehydroepiandrosterone 3-sulfate(in) + 2 Na(+)(in). It catalyses the reaction androst-5-ene-diol 3-sulfate(out) + 2 Na(+)(out) = androst-5-ene-diol 3-sulfate(in) + 2 Na(+)(in). It carries out the reaction pregnenolone sulfate(out) + 2 Na(+)(out) = pregnenolone sulfate(in) + 2 Na(+)(in). The catalysed reaction is taurolithocholate 3-sulfate(out) + 2 Na(+)(out) = taurolithocholate 3-sulfate(in) + 2 Na(+)(in). The enzyme catalyses androsterone 3alpha-sulfate(out) + 2 Na(+)(out) = androsterone 3alpha-sulfate(in) + 2 Na(+)(in). It catalyses the reaction 5alpha-dihydrotestosterone sulfate(out) + 2 Na(+)(out) = 5alpha-dihydrotestosterone sulfate(in) + 2 Na(+)(in). It carries out the reaction 17beta-estradiol 17-sulfate(out) + 2 Na(+)(out) = 17beta-estradiol 17-sulfate(in) + 2 Na(+)(in). The catalysed reaction is 17alpha-hydroxypregnenolone 3-sulfate(out) + 2 Na(+)(out) = 17alpha-hydroxypregnenolone 3-sulfate(in) + 2 Na(+)(in). The enzyme catalyses epiandrosterone 3-sulfate(out) + 2 Na(+)(out) = epiandrosterone 3-sulfate(in) + 2 Na(+)(in). It catalyses the reaction epitestosterone 17-sulfate(out) + 2 Na(+)(out) = epitestosterone 17-sulfate(in) + 2 Na(+)(in). It carries out the reaction testosterone 17-sulfate(out) + 2 Na(+)(out) = testosterone 17-sulfate(in) + 2 Na(+)(in). The catalysed reaction is 16alpha-hydroxydehydroepiandrosterone 3-sulfate(out) + 2 Na(+)(out) = 16alpha-hydroxydehydroepiandrosterone 3-sulfate(in) + 2 Na(+)(in). In terms of biological role, transports sulfoconjugated steroid hormones from the extracellular compartment into the cytosol in a sodium-dependent manner without hydrolysis. Steroid sulfate hormones are commonly considered to be biologically inactive metabolites, that may be activated by steroid sulfatases into free steroids. May play an important role by delivering sulfoconjugated steroids to specific target cells in reproductive organs. May play a role transporting the estriol precursor 16alpha-hydroxydehydroepiandrosterone 3-sulfate (16a-OH-DHEAS) at the fetal blood vessel endothelium. Can also transport other sulfoconjugated molecules such as taurolithocholic acid-3-sulfate and sulfoconjugated pyrenes. The sequence is that of Sodium-dependent organic anion transporter (Slc10a6) from Rattus norvegicus (Rat).